We begin with the raw amino-acid sequence, 242 residues long: 1-(5-phosphoribosyl)-5-[(5-phosphoribosylamino)methylideneamino] imidazole-4-carboxamide isomerase (242 aa).

The Proton acceptor role is filled by Asp-8. The active-site Proton donor is the Asp-129.

This sequence belongs to the HisA/HisF family.

Its subcellular location is the cytoplasm. The enzyme catalyses 1-(5-phospho-beta-D-ribosyl)-5-[(5-phospho-beta-D-ribosylamino)methylideneamino]imidazole-4-carboxamide = 5-[(5-phospho-1-deoxy-D-ribulos-1-ylimino)methylamino]-1-(5-phospho-beta-D-ribosyl)imidazole-4-carboxamide. It participates in amino-acid biosynthesis; L-histidine biosynthesis; L-histidine from 5-phospho-alpha-D-ribose 1-diphosphate: step 4/9. The polypeptide is 1-(5-phosphoribosyl)-5-[(5-phosphoribosylamino)methylideneamino] imidazole-4-carboxamide isomerase (Clostridium botulinum (strain Kyoto / Type A2)).